The chain runs to 57 residues: Large ribosomal subunit protein bL32 (57 aa).

Over residues 1–20 the composition is skewed to basic residues; the sequence is MAVPKKKTSKAKRDQRRATW. The interval 1-24 is disordered; it reads MAVPKKKTSKAKRDQRRATWRRQA.

This sequence belongs to the bacterial ribosomal protein bL32 family.

In Gloeothece citriformis (strain PCC 7424) (Cyanothece sp. (strain PCC 7424)), this protein is Large ribosomal subunit protein bL32.